A 368-amino-acid chain; its full sequence is tRNA-specific 2-thiouridylase MnmA (368 aa).

ATP is bound by residues 24-31 and Leu50; that span reads AMSGGVDS. Catalysis depends on Cys117, which acts as the Nucleophile. A disulfide bond links Cys117 and Cys213. Position 141 (Gly141) interacts with ATP. The tract at residues 163–165 is interaction with tRNA; sequence KDQ. The Cysteine persulfide intermediate role is filled by Cys213.

The protein belongs to the MnmA/TRMU family.

The protein localises to the cytoplasm. It carries out the reaction S-sulfanyl-L-cysteinyl-[protein] + uridine(34) in tRNA + AH2 + ATP = 2-thiouridine(34) in tRNA + L-cysteinyl-[protein] + A + AMP + diphosphate + H(+). Its function is as follows. Catalyzes the 2-thiolation of uridine at the wobble position (U34) of tRNA, leading to the formation of s(2)U34. The polypeptide is tRNA-specific 2-thiouridylase MnmA (Wolbachia pipientis subsp. Culex pipiens (strain wPip)).